Reading from the N-terminus, the 342-residue chain is S-adenosylmethionine:tRNA ribosyltransferase-isomerase (342 aa).

It belongs to the QueA family. As to quaternary structure, monomer.

The protein localises to the cytoplasm. It carries out the reaction 7-aminomethyl-7-carbaguanosine(34) in tRNA + S-adenosyl-L-methionine = epoxyqueuosine(34) in tRNA + adenine + L-methionine + 2 H(+). The protein operates within tRNA modification; tRNA-queuosine biosynthesis. Transfers and isomerizes the ribose moiety from AdoMet to the 7-aminomethyl group of 7-deazaguanine (preQ1-tRNA) to give epoxyqueuosine (oQ-tRNA). In Zymomonas mobilis subsp. mobilis (strain ATCC 31821 / ZM4 / CP4), this protein is S-adenosylmethionine:tRNA ribosyltransferase-isomerase.